Reading from the N-terminus, the 79-residue chain is Submaxillary gland androgen-regulated protein 3B (79 aa).

The N-terminal stretch at 1–22 is a signal peptide; that stretch reads MKSLTWILGLWALAACFTPGES. Residues 19-79 are disordered; sequence PGESQRGPRG…GIFPPPPPQP (61 aa). At Gln-23 the chain carries Pyrrolidone carboxylic acid. Positions 28–79 are enriched in pro residues; that stretch reads GPYPPGPLAPPQPFGPGFVPPPPPPPYGPGRIPPPPPAPYGPGIFPPPPPQP.

It belongs to the PROL1/PROL3 family. Post-translationally, P-A and D1A are probably degradation products of P-B. Secreted into saliva by submaxillary gland. Not expressed in heart, brain, lung, liver, skeletal muscle, Kidney, pancreas or placenta.

It is found in the secreted. This Homo sapiens (Human) protein is Submaxillary gland androgen-regulated protein 3B (SMR3B).